The chain runs to 272 residues: Tryptophan synthase alpha chain (272 aa).

Catalysis depends on proton acceptor residues Glu49 and Asp60.

Belongs to the TrpA family. Tetramer of two alpha and two beta chains.

The catalysed reaction is (1S,2R)-1-C-(indol-3-yl)glycerol 3-phosphate + L-serine = D-glyceraldehyde 3-phosphate + L-tryptophan + H2O. Its pathway is amino-acid biosynthesis; L-tryptophan biosynthesis; L-tryptophan from chorismate: step 5/5. In terms of biological role, the alpha subunit is responsible for the aldol cleavage of indoleglycerol phosphate to indole and glyceraldehyde 3-phosphate. This Polaromonas sp. (strain JS666 / ATCC BAA-500) protein is Tryptophan synthase alpha chain.